A 134-amino-acid polypeptide reads, in one-letter code: Acyl carrier protein, chloroplastic (134 aa).

The transit peptide at 1-51 directs the protein to the chloroplast; sequence MATTFSASVSTLATSLATPTRISFQKPALVSRTNLSFNLRRSIPTRLSVSC. The Carrier domain maps to 55-130; that stretch reads PETIEKVSKI…EAAELIEELV (76 aa). At Ser-90 the chain carries O-(pantetheine 4'-phosphoryl)serine.

Belongs to the acyl carrier protein (ACP) family. In terms of processing, 4'-phosphopantetheine is transferred from CoA to a specific serine of apo-ACP by acpS. This modification is essential for activity because fatty acids are bound in thioester linkage to the sulfhydryl of the prosthetic group. Seed.

It is found in the plastid. The protein localises to the chloroplast. It functions in the pathway lipid metabolism; fatty acid biosynthesis. Carrier of the growing fatty acid chain in fatty acid biosynthesis. The protein is Acyl carrier protein, chloroplastic (ACL1.A3) of Brassica napus (Rape).